The sequence spans 328 residues: 4-hydroxy-3-methylbut-2-enyl diphosphate reductase (328 aa).

Cys13 lines the [4Fe-4S] cluster pocket. (2E)-4-hydroxy-3-methylbut-2-enyl diphosphate is bound by residues His41 and His75. Residues His41 and His75 each coordinate dimethylallyl diphosphate. Residues His41 and His75 each contribute to the isopentenyl diphosphate site. Cys97 serves as a coordination point for [4Fe-4S] cluster. His125 provides a ligand contact to (2E)-4-hydroxy-3-methylbut-2-enyl diphosphate. His125 contacts dimethylallyl diphosphate. His125 is an isopentenyl diphosphate binding site. The active-site Proton donor is Glu127. Thr168 is a binding site for (2E)-4-hydroxy-3-methylbut-2-enyl diphosphate. Residue Cys225 coordinates [4Fe-4S] cluster. 4 residues coordinate (2E)-4-hydroxy-3-methylbut-2-enyl diphosphate: Ser253, Ser254, Asn255, and Ser302. The dimethylallyl diphosphate site is built by Ser253, Ser254, Asn255, and Ser302. Isopentenyl diphosphate is bound by residues Ser253, Ser254, Asn255, and Ser302.

This sequence belongs to the IspH family. The cofactor is [4Fe-4S] cluster.

It carries out the reaction isopentenyl diphosphate + 2 oxidized [2Fe-2S]-[ferredoxin] + H2O = (2E)-4-hydroxy-3-methylbut-2-enyl diphosphate + 2 reduced [2Fe-2S]-[ferredoxin] + 2 H(+). It catalyses the reaction dimethylallyl diphosphate + 2 oxidized [2Fe-2S]-[ferredoxin] + H2O = (2E)-4-hydroxy-3-methylbut-2-enyl diphosphate + 2 reduced [2Fe-2S]-[ferredoxin] + 2 H(+). It participates in isoprenoid biosynthesis; dimethylallyl diphosphate biosynthesis; dimethylallyl diphosphate from (2E)-4-hydroxy-3-methylbutenyl diphosphate: step 1/1. It functions in the pathway isoprenoid biosynthesis; isopentenyl diphosphate biosynthesis via DXP pathway; isopentenyl diphosphate from 1-deoxy-D-xylulose 5-phosphate: step 6/6. Catalyzes the conversion of 1-hydroxy-2-methyl-2-(E)-butenyl 4-diphosphate (HMBPP) into a mixture of isopentenyl diphosphate (IPP) and dimethylallyl diphosphate (DMAPP). Acts in the terminal step of the DOXP/MEP pathway for isoprenoid precursor biosynthesis. This chain is 4-hydroxy-3-methylbut-2-enyl diphosphate reductase, found in Chlorobium chlorochromatii (strain CaD3).